A 525-amino-acid chain; its full sequence is Bestrophin homolog 15 (525 aa).

Helical transmembrane passes span 36-56 (LFMFIIAFITVSSVYRSNLII), 71-91 (FDQNMDFIPLTFMLGFFVTII), 237-257 (LAYPQVVFLAVRSYFFMALIA), and 273-293 (ILYPTVPFVMSILQFIFVVGW).

This sequence belongs to the anion channel-forming bestrophin (TC 1.A.46) family. Calcium-sensitive chloride channel subfamily. As to quaternary structure, forms oligomers.

The protein resides in the cell membrane. Forms chloride channels. This Caenorhabditis elegans protein is Bestrophin homolog 15 (best-15).